Consider the following 520-residue polypeptide: Laccase (520 aa).

The signal sequence occupies residues 1–21 (MSRFQSLLAFVVASLAAVAHA). Plastocyanin-like domains lie at 23–148 (IGPT…FVVY) and 160–302 (VDND…ILRY). N-linked (GlcNAc...) asparagine glycosylation is found at Asn-72 and Asn-75. The Cu cation site is built by His-85, His-87, His-130, and His-132. Intrachain disulfides connect Cys-106–Cys-509 and Cys-138–Cys-226. N-linked (GlcNAc...) asparagine glycans are attached at residues Asn-210, Asn-229, and Asn-354. Residues 369–491 (TVPVLLQIIS…AGFAVVFAED (123 aa)) form the Plastocyanin-like 3 domain. Residues His-416, His-419, His-421, His-473, Cys-474, His-475, and His-479 each contribute to the Cu cation site.

It belongs to the multicopper oxidase family. Cu cation is required as a cofactor.

The protein resides in the secreted. The enzyme catalyses 4 hydroquinone + O2 = 4 benzosemiquinone + 2 H2O. Lignin degradation and detoxification of lignin-derived products. Has activity towards guaiacol. The chain is Laccase from Trametes hirsuta (White-rot fungus).